Here is a 717-residue protein sequence, read N- to C-terminus: MFETHKVEIEWAGRPLKLETGKIARQADGAVLATYGETVVLATVVSAKAPKPGQDFFPLTVNYQEKTYAAGKIPGGYFKREGRPSENETLVSRLIDRPIRPLFPDGYKNDTQVIVTVMQHDLENNPDVVSMVAASAALTLSGIPFMGPIGGARVGYINGEYVLNPHLDEMDESSLDLVVAGTQEAVLMVESEAKELPEDVMLGAVVFGQQGFQPVIDAIIKLAEVAAKEPREFDPEDHSALENAMLAIAEDELRNAYKITEKAARYAAVDAVKAKVKEHFLPEGIENPAHTAEEIGSVFKHLQAKIVRWNILDTKSRIDGRDLETVRPIVSEVGLLPRTHGSALFTRGETQAIVVATLGTGEDEQYVDSLTGMYKERFMLHYNFPPFSVGETGRMGSPGRREIGHGKLAWRAIRPMLPEAEQFPYTLRVVSEITESNGSSSMATVCGTSLALMDAGVPLAKPVAGIAMGLIKEDERFAVLSDILGDEDHLGDMDFKVAGTEAGITSLQMDIKIEGITEEIMGIALNQAKGGRLHILGEMAKAISESRGQLGEFAPRIEVMNIPVDKIREVIGSGGKVIREIVEKTGAKINIEDDGTVKIASSSGKEIEAARKWIHSIVAEPEVGQIYEGTVVKTADFGAFVNFFGARDGLVHISQLASERVAKTTDVVKEGDKVWVKLMGFDERGKVRLSMKVVDQATGKEVVAEKGEKKDGGEAAE.

Residues Asp-488 and Asp-494 each contribute to the Mg(2+) site. The region spanning 555 to 614 (PRIEVMNIPVDKIREVIGSGGKVIREIVEKTGAKINIEDDGTVKIASSSGKEIEAARKWI) is the KH domain. The S1 motif domain maps to 624 to 692 (GQIYEGTVVK…ERGKVRLSMK (69 aa)).

This sequence belongs to the polyribonucleotide nucleotidyltransferase family. Mg(2+) is required as a cofactor.

It is found in the cytoplasm. The enzyme catalyses RNA(n+1) + phosphate = RNA(n) + a ribonucleoside 5'-diphosphate. Its function is as follows. Involved in mRNA degradation. Catalyzes the phosphorolysis of single-stranded polyribonucleotides processively in the 3'- to 5'-direction. The sequence is that of Polyribonucleotide nucleotidyltransferase from Sinorhizobium fredii (strain NBRC 101917 / NGR234).